The sequence spans 417 residues: UDP-N-acetylglucosamine 1-carboxyvinyltransferase (417 aa).

22–23 (KN) lines the phosphoenolpyruvate pocket. A UDP-N-acetyl-alpha-D-glucosamine-binding site is contributed by R92. Residue C116 is the Proton donor of the active site. C116 carries the 2-(S-cysteinyl)pyruvic acid O-phosphothioketal modification. UDP-N-acetyl-alpha-D-glucosamine contacts are provided by D304 and I326.

The protein belongs to the EPSP synthase family. MurA subfamily.

It localises to the cytoplasm. It catalyses the reaction phosphoenolpyruvate + UDP-N-acetyl-alpha-D-glucosamine = UDP-N-acetyl-3-O-(1-carboxyvinyl)-alpha-D-glucosamine + phosphate. It participates in cell wall biogenesis; peptidoglycan biosynthesis. Its function is as follows. Cell wall formation. Adds enolpyruvyl to UDP-N-acetylglucosamine. In Geotalea uraniireducens (strain Rf4) (Geobacter uraniireducens), this protein is UDP-N-acetylglucosamine 1-carboxyvinyltransferase.